A 552-amino-acid polypeptide reads, in one-letter code: Putative lipase ATG15 (552 aa).

At 1–26 (MLHITEKEQTRGLRQLEKRGKRLLPP) the chain is on the cytoplasmic side. A helical; Signal-anchor for type II membrane protein membrane pass occupies residues 27–49 (LIKFIWFCLISAACVAATTFYWL). The Lumenal segment spans residues 50–552 (RLSPVHNIHK…WRFVSHDDKE (503 aa)). Asparagine 63, asparagine 147, asparagine 239, asparagine 307, and asparagine 391 each carry an N-linked (GlcNAc...) asparagine glycan. The active-site Charge relay system is serine 409. An N-linked (GlcNAc...) asparagine glycan is attached at asparagine 526.

The protein belongs to the AB hydrolase superfamily. Lipase family. Binds to both phosphatidylinositol (PI) and phosphatidylinositol 3,5-bisphosphate (PIP2).

The protein resides in the endosome. Its subcellular location is the multivesicular body membrane. It localises to the prevacuolar compartment membrane. The catalysed reaction is a triacylglycerol + H2O = a diacylglycerol + a fatty acid + H(+). Lipase which is essential for lysis of subvacuolar cytoplasm to vacuole targeted bodies and intravacuolar autophagic bodies. Involved in the lysis of intravacuolar multivesicular body (MVB) vesicles. The intravacuolar membrane disintegration by ATG15 is critical to life span extension. In Lodderomyces elongisporus (strain ATCC 11503 / CBS 2605 / JCM 1781 / NBRC 1676 / NRRL YB-4239) (Yeast), this protein is Putative lipase ATG15 (ATG15).